Here is a 235-residue protein sequence, read N- to C-terminus: Dual specificity protein phosphatase 15 (235 aa).

Gly-2 carries the N-myristoyl glycine lipid modification. Residues 4-144 (GMTKVLPGLY…LEEFGWANSQ (141 aa)) enclose the Tyrosine-protein phosphatase domain. Cys-88 acts as the Phosphocysteine intermediate in catalysis. The segment covering 183 to 193 (AASATTASSAA) has biased composition (low complexity). The interval 183–212 (AASATTASSAAEGTLQRLVPRSPRDSHQPL) is disordered.

The protein belongs to the protein-tyrosine phosphatase family. Non-receptor class dual specificity subfamily. As to expression, isoform 1 is expressed in testis; predominantly in developing spermatocytes (at protein level). Isoform 2 is highly expressed in testis. Expressed in spinal cord and specifically in oligodendroglial cells. Expressed in embryonic brain cortex; down-regulated in mice with experimental autoimmune encephalomyelitis (EAE).

The protein localises to the cell membrane. It carries out the reaction O-phospho-L-tyrosyl-[protein] + H2O = L-tyrosyl-[protein] + phosphate. The catalysed reaction is O-phospho-L-seryl-[protein] + H2O = L-seryl-[protein] + phosphate. It catalyses the reaction O-phospho-L-threonyl-[protein] + H2O = L-threonyl-[protein] + phosphate. Its function is as follows. May dephosphorylate MAPK13, ATF2, ERBB3, PDGFRB and SNX6. In terms of biological role, may play a role in the regulation of oligodendrocyte differentiation. May play a role in the regulation of myelin formation. Involved in the regulation of Erk1/2 phosphorylation in Schwann cells; the signaling may be linked to the regulation of myelination. The polypeptide is Dual specificity protein phosphatase 15 (Mus musculus (Mouse)).